We begin with the raw amino-acid sequence, 376 residues long: MARSTPCSQTSLAVPNHFSLVSHVTVPSEGVMPSPLSLCRCLPRELSPSVDSRSCSIPLVAPRRAGKLFLGTTPPRAPGLPRRLAWFSIDWEQVCLMHRLGSGGFGSVYKATYHGVPVAIKQVNKCTKDLRASQRSFWAELNIARLRHDNIVRVVAASTRTPEDSNSLGTIIMEFGGNVTLHQVIYGATRSPEPLSCREQLSLGKCLKYSLDVVNGLLFLHSQSILHLDLKPANILISEQDVCKISDFGCSQKLQDLRCRQASPHHIGGTYTHQAPEILKGEIATPKADIYSFGITLWQMTTREVPYSGEPQYVQYAVVAYNLRPSLAGAVFTASLTGKTLQNIIQSCWEARALQRPGAELLQRDLKALADSIEPM.

In terms of domain architecture, Protein kinase spans 94 to 376 (VCLMHRLGSG…KALADSIEPM (283 aa)). Residues 100-108 (LGSGGFGSV) and Lys121 each bind ATP. The active-site Proton acceptor is Asp229.

This sequence belongs to the protein kinase superfamily. Ser/Thr protein kinase family.

It carries out the reaction L-seryl-[protein] + ATP = O-phospho-L-seryl-[protein] + ADP + H(+). The catalysed reaction is L-threonyl-[protein] + ATP = O-phospho-L-threonyl-[protein] + ADP + H(+). This Moloney murine sarcoma virus (strain m1) (MoMSV) protein is Serine/threonine-protein kinase-transforming protein mos (V-MOS).